Consider the following 373-residue polypeptide: NADPH-dependent 3-keto-steroid reductase Hsd3b5 (373 aa).

Residues 10–15 (GAGGFL), tyrosine 155, and lysine 159 each bind NADP(+). Lysine 159 acts as the Proton donor in catalysis. The helical transmembrane segment at 288-308 (LSLLYWLAFLLETVSFLLRPV) threads the bilayer. Lysine 350 carries the N6-acetyllysine modification.

The protein belongs to the 3-beta-HSD family. In terms of tissue distribution, expressed in the male liver, starting in late puberty.

The protein resides in the endoplasmic reticulum membrane. Its subcellular location is the mitochondrion membrane. It carries out the reaction a 3beta-hydroxysteroid + NADP(+) = a 3-oxosteroid + NADPH + H(+). The enzyme catalyses 5alpha-androstane-3beta,17beta-diol + NADP(+) = 17beta-hydroxy-5alpha-androstan-3-one + NADPH + H(+). Its pathway is steroid metabolism. Functionally, responsible for the reduction of the oxo group on the C-3 of 5alpha-androstane steroids. Catalyzes the conversion of dihydrotestosterone to its inactive form 5alpha-androstanediol, that does not bind androgen receptor/AR. Does not function as an isomerase. The protein is NADPH-dependent 3-keto-steroid reductase Hsd3b5 of Mus musculus (Mouse).